The primary structure comprises 209 residues: Uracil phosphoribosyltransferase (209 aa).

5-phospho-alpha-D-ribose 1-diphosphate is bound by residues arginine 79, arginine 104, and 131–139 (DPMLATGNS). Residues isoleucine 194 and 199–201 (GDA) each bind uracil. Residue aspartate 200 participates in 5-phospho-alpha-D-ribose 1-diphosphate binding.

It belongs to the UPRTase family. Mg(2+) is required as a cofactor.

The catalysed reaction is UMP + diphosphate = 5-phospho-alpha-D-ribose 1-diphosphate + uracil. The protein operates within pyrimidine metabolism; UMP biosynthesis via salvage pathway; UMP from uracil: step 1/1. Its activity is regulated as follows. Allosterically activated by GTP. Its function is as follows. Catalyzes the conversion of uracil and 5-phospho-alpha-D-ribose 1-diphosphate (PRPP) to UMP and diphosphate. The protein is Uracil phosphoribosyltransferase of Acidovorax sp. (strain JS42).